We begin with the raw amino-acid sequence, 137 residues long: Gonadotropin subunit beta-2 (137 aa).

The first 24 residues, 1-24, serve as a signal peptide directing secretion; that stretch reads MLPFMLSSFLGASPSIWPLAPAEA. 6 disulfide bridges follow: Cys30-Cys76, Cys44-Cys91, Cys47-Cys129, Cys55-Cys107, Cys59-Cys109, and Cys112-Cys119. N-linked (GlcNAc...) asparagine glycosylation occurs at Asn34.

Belongs to the glycoprotein hormones subunit beta family. Heterodimer of an alpha and a beta chain.

The protein localises to the secreted. In terms of biological role, involved in gametogenesis and steroidogenesis. This chain is Gonadotropin subunit beta-2 (cgbb), found in Acanthopagrus latus (Yellowfin seabream).